The following is a 373-amino-acid chain: L-threonine 3-dehydrogenase, mitochondrial (373 aa).

Residues 62-67 (GGLGQL), 88-90 (DIR), 106-107 (DI), Tyr195, Lys199, and Ile225 contribute to the NAD(+) site. Tyr195 acts as the Proton donor/acceptor in catalysis.

The protein belongs to the NAD(P)-dependent epimerase/dehydratase family. Homodimer.

It localises to the mitochondrion. It carries out the reaction L-threonine + NAD(+) = (2S)-2-amino-3-oxobutanoate + NADH + H(+). Its pathway is amino-acid degradation; L-threonine degradation via oxydo-reductase pathway; glycine from L-threonine: step 1/2. Its function is as follows. Catalyzes the NAD(+)-dependent oxidation of L-threonine to 2-amino-3-ketobutyrate, mediating L-threonine catabolism. In Bos taurus (Bovine), this protein is L-threonine 3-dehydrogenase, mitochondrial.